The sequence spans 184 residues: Putative F-box protein At4g22420 (184 aa).

Residues 1-46 (MAECPTDLINEMFLRLRATTLKKCRVLSKPCFSLIDSPEKRVIERS) enclose the F-box domain. A disordered region spans residues 68–126 (DDDEEEGNELKKSQARRNGVAKGEGNGNKVNGEAQEEVDDEEDDDDDASKGRGKHSRHV). Over residues 85–100 (NGVAKGEGNGNKVNGE) the composition is skewed to low complexity. Positions 101–114 (AQEEVDDEEDDDDD) are enriched in acidic residues.

The polypeptide is Putative F-box protein At4g22420 (Arabidopsis thaliana (Mouse-ear cress)).